Consider the following 325-residue polypeptide: tRNA N6-adenosine threonylcarbamoyltransferase (325 aa).

Fe cation-binding residues include His-107, His-111, and Tyr-127. Substrate contacts are provided by residues 127–131 (YVSGG), Asp-159, Gly-172, Glu-176, and Asn-257. Asp-285 provides a ligand contact to Fe cation.

It belongs to the KAE1 / TsaD family. Monomer. Component of the KEOPS complex that consists of Kae1, Bud32, Cgi121 and Pcc1; the whole complex dimerizes. Requires Fe(2+) as cofactor.

The protein resides in the cytoplasm. It catalyses the reaction L-threonylcarbamoyladenylate + adenosine(37) in tRNA = N(6)-L-threonylcarbamoyladenosine(37) in tRNA + AMP + H(+). In terms of biological role, required for the formation of a threonylcarbamoyl group on adenosine at position 37 (t(6)A37) in tRNAs that read codons beginning with adenine. Is a component of the KEOPS complex that is probably involved in the transfer of the threonylcarbamoyl moiety of threonylcarbamoyl-AMP (TC-AMP) to the N6 group of A37. Kae1 likely plays a direct catalytic role in this reaction, but requires other protein(s) of the complex to fulfill this activity. The polypeptide is tRNA N6-adenosine threonylcarbamoyltransferase (Thermococcus gammatolerans (strain DSM 15229 / JCM 11827 / EJ3)).